Here is a 322-residue protein sequence, read N- to C-terminus: 4-diphosphocytidyl-2-C-methyl-D-erythritol kinase (322 aa).

Lys25 is an active-site residue. 110–120 (PVAGGMAGGSA) lines the ATP pocket. Asp152 is a catalytic residue.

Belongs to the GHMP kinase family. IspE subfamily.

The catalysed reaction is 4-CDP-2-C-methyl-D-erythritol + ATP = 4-CDP-2-C-methyl-D-erythritol 2-phosphate + ADP + H(+). The protein operates within isoprenoid biosynthesis; isopentenyl diphosphate biosynthesis via DXP pathway; isopentenyl diphosphate from 1-deoxy-D-xylulose 5-phosphate: step 3/6. In terms of biological role, catalyzes the phosphorylation of the position 2 hydroxy group of 4-diphosphocytidyl-2C-methyl-D-erythritol. In Mycolicibacterium gilvum (strain PYR-GCK) (Mycobacterium gilvum (strain PYR-GCK)), this protein is 4-diphosphocytidyl-2-C-methyl-D-erythritol kinase.